Here is a 676-residue protein sequence, read N- to C-terminus: Hypermethylated in cancer 1 protein (676 aa).

The segment at 1 to 27 (APGARPAASRERGHKSREERCGERGAA) is disordered. Positions 8–23 (ASRERGHKSREERCGE) are enriched in basic and acidic residues. Residues 63-126 (CDVIIVVQNA…IYTGRLGECE (64 aa)) form the BTB domain. The interval 241-245 (GLDLS) is binding to CtBP. Disordered regions lie at residues 264 to 326 (PAEP…LPRG) and 342 to 405 (GPYL…DRYC). Composition is skewed to basic and acidic residues over residues 266 to 278 (EPRE…RHDS) and 351 to 361 (EKELEREEKAE). Low complexity predominate over residues 384 to 398 (STSEETGSSEGPSPG). 5 consecutive C2H2-type zinc fingers follow at residues 420 to 447 (YVCI…EEEL), 474 to 501 (YRCS…LTRP), 502 to 529 (YPCT…GLKP), 530 to 557 (FACD…GEKP), and 558 to 585 (YECQ…AGPD).

The protein belongs to the krueppel C2H2-type zinc-finger protein family. Hic subfamily. In terms of assembly, interacts with CtBP. In terms of tissue distribution, isoform 1 is highly expressed in kidney and lung. Expression of isoform 2 is higher in the lens, retina and stomach, and extremely low in heart, muscle, kidney and lung. Isoform 3 is weakly expressed in heart, kidney and lens.

The protein resides in the nucleus. Functionally, binds specifically to the gamma F-1-binding motif of the gamma F-crystallin promoter. May have a regulatory role in sclerotome specification and/or differentiation. Isoform 2 functions as a transcriptional repressor in lens cells. This chain is Hypermethylated in cancer 1 protein (HIC1), found in Gallus gallus (Chicken).